We begin with the raw amino-acid sequence, 465 residues long: Phosphomethylpyrimidine synthase (465 aa).

Substrate contacts are provided by residues N80, M109, Y139, H175, 195–197, 236–239, and E275; these read SRG and DSLR. H279 contributes to the Zn(2+) binding site. Y302 is a binding site for substrate. Position 343 (H343) interacts with Zn(2+). [4Fe-4S] cluster contacts are provided by C423, C426, and C431.

This sequence belongs to the ThiC family. Requires [4Fe-4S] cluster as cofactor.

It catalyses the reaction 5-amino-1-(5-phospho-beta-D-ribosyl)imidazole + S-adenosyl-L-methionine = 4-amino-2-methyl-5-(phosphooxymethyl)pyrimidine + CO + 5'-deoxyadenosine + formate + L-methionine + 3 H(+). Its pathway is cofactor biosynthesis; thiamine diphosphate biosynthesis. Functionally, catalyzes the synthesis of the hydroxymethylpyrimidine phosphate (HMP-P) moiety of thiamine from aminoimidazole ribotide (AIR) in a radical S-adenosyl-L-methionine (SAM)-dependent reaction. This Synechococcus sp. (strain CC9311) protein is Phosphomethylpyrimidine synthase.